We begin with the raw amino-acid sequence, 518 residues long: D-aminopeptidase (518 aa).

The active-site Nucleophile is serine 62. Lysine 65 serves as the catalytic Proton donor/acceptor. The tract at residues 373-392 (FGTGPEKMDISGENEAQSSM) is disordered. The segment at 477-487 (QRSMDAPSPGE) is important for specificity. Aspartate 481 serves as a coordination point for substrate.

This sequence belongs to the peptidase S12 family. Homodimer.

The enzyme catalyses Release of an N-terminal D-amino acid from a peptide, Xaa-|-Yaa-, in which Xaa is preferably D-Ala, D-Ser or D-Thr. D-amino acid amides and methyl esters also are hydrolyzed, as is glycine amide.. Inhibited by beta-lactam compounds such as 6-aminopenicillic acid, 7-aminocephalosporanic acid, benzylpenicillin and ampicillin. Inhibited by p-chloromercuribenzoate. Hydrolyzes N-terminal residues in D-amino acid-containing peptides. This is D-aminopeptidase from Brucella melitensis biotype 2 (strain ATCC 23457).